Here is a 264-residue protein sequence, read N- to C-terminus: ATP synthase subunit a (264 aa).

Helical transmembrane passes span 29–49 (TWHIDSLFFSVGLGVLFLWIF), 90–110 (IAPLALTIFMWVFMMNFMDMI), 134–154 (DVNITFSLAIGVFVLIIYYSI), 177–197 (IPVNLLLETVTLIAKPISLAL), 208–228 (LIFILIALMYGTNLLLSSLGV), and 235–255 (LIFHILVITLQAFIFMMLTIV).

It belongs to the ATPase A chain family. In terms of assembly, F-type ATPases have 2 components, CF(1) - the catalytic core - and CF(0) - the membrane proton channel. CF(1) has five subunits: alpha(3), beta(3), gamma(1), delta(1), epsilon(1). CF(0) has three main subunits: a(1), b(2) and c(9-12). The alpha and beta chains form an alternating ring which encloses part of the gamma chain. CF(1) is attached to CF(0) by a central stalk formed by the gamma and epsilon chains, while a peripheral stalk is formed by the delta and b chains.

The protein resides in the cell inner membrane. Its function is as follows. Key component of the proton channel; it plays a direct role in the translocation of protons across the membrane. The chain is ATP synthase subunit a from Shewanella oneidensis (strain ATCC 700550 / JCM 31522 / CIP 106686 / LMG 19005 / NCIMB 14063 / MR-1).